The primary structure comprises 339 residues: Ribosomal RNA small subunit methyltransferase C (339 aa).

The protein belongs to the methyltransferase superfamily. RsmC family. As to quaternary structure, monomer.

The protein localises to the cytoplasm. It carries out the reaction guanosine(1207) in 16S rRNA + S-adenosyl-L-methionine = N(2)-methylguanosine(1207) in 16S rRNA + S-adenosyl-L-homocysteine + H(+). Specifically methylates the guanine in position 1207 of 16S rRNA in the 30S particle. The sequence is that of Ribosomal RNA small subunit methyltransferase C from Aliivibrio fischeri (strain ATCC 700601 / ES114) (Vibrio fischeri).